The primary structure comprises 859 residues: Envelope glycoprotein (859 aa).

Positions 1–6 (MVSIAF) are excised as a propeptide. Over 7 to 614 (YGGIPGGIST…KDLWSHIGNW (608 aa)) the chain is Extracellular. 14 N-linked (GlcNAc...) asparagine; by host glycosylation sites follow: asparagine 40, asparagine 112, asparagine 141, asparagine 148, asparagine 186, asparagine 214, asparagine 233, asparagine 244, asparagine 340, asparagine 368, asparagine 399, asparagine 406, asparagine 411, and asparagine 422. Positions 446 to 466 (FGISAIVAAIVAATAIAASAT) are fusion peptide. Asparagine 483 and asparagine 490 each carry an N-linked (GlcNAc...) asparagine; by host glycan. An immunosuppression region spans residues 498–513 (LIERQIKILYAMILQT). N-linked (GlcNAc...) asparagine; by host glycans are attached at residues asparagine 550 and asparagine 557. Coiled-coil stretches lie at residues 576–624 (ILTT…SIIK) and 663–699 (KKFH…YYKQ). A helical membrane pass occupies residues 615–635 (IPGLGASIIKYIVMFLLIYLL). At 636 to 859 (LTSSPKILRA…TSHVSMPQYV (224 aa)) the chain is on the cytoplasmic side. Residues 745–764 (AAINEHKNGSGGNNPHQGSL) are disordered.

As to quaternary structure, the mature envelope protein (Env) consists of a trimer of SU-TM heterodimers attached by noncovalent interactions or by a labile interchain disulfide bond. In terms of processing, specific enzymatic cleavages in vivo yield mature proteins. Envelope glycoproteins are synthesized as an inactive precursor that is N-glycosylated and processed likely by host cell furin or by a furin-like protease in the Golgi to yield the mature SU and TM proteins. The cleavage site between SU and TM requires the minimal sequence [KR]-X-[KR]-R.

Its subcellular location is the virion membrane. It is found in the host cell membrane. The surface protein (SU) attaches the virus to the host cell by binding to its receptor. This interaction triggers the refolding of the transmembrane protein (TM) and is thought to activate its fusogenic potential by unmasking its fusion peptide. Fusion occurs at the host cell plasma membrane. In terms of biological role, the transmembrane protein (TM) acts as a class I viral fusion protein. Under the current model, the protein has at least 3 conformational states: pre-fusion native state, pre-hairpin intermediate state, and post-fusion hairpin state. During viral and target cell membrane fusion, the coiled coil regions (heptad repeats) assume a trimer-of-hairpins structure, positioning the fusion peptide in close proximity to the C-terminal region of the ectodomain. The formation of this structure appears to drive apposition and subsequent fusion of viral and target cell membranes. Membranes fusion leads to delivery of the nucleocapsid into the cytoplasm. This Equus asinus (Donkey) protein is Envelope glycoprotein (env).